The sequence spans 359 residues: Peptide chain release factor 1 (359 aa).

Glutamine 235 carries the post-translational modification N5-methylglutamine.

Belongs to the prokaryotic/mitochondrial release factor family. In terms of processing, methylated by PrmC. Methylation increases the termination efficiency of RF1.

The protein resides in the cytoplasm. In terms of biological role, peptide chain release factor 1 directs the termination of translation in response to the peptide chain termination codons UAG and UAA. The chain is Peptide chain release factor 1 from Anaplasma phagocytophilum (strain HZ).